The following is a 36-amino-acid chain: Neuropeptide F (36 aa).

Position 36 is a phenylalanine amide (F36).

Belongs to the NPY family. In terms of tissue distribution, central and peripheral nervous system, and muscular pharynx.

The protein resides in the secreted. Its function is as follows. May perform an important neurotransmitter function and may regulate muscular activity. The sequence is that of Neuropeptide F from Arthurdendyus triangulatus (New Zealand flatworm).